The following is a 94-amino-acid chain: DASH complex subunit DAD5 (94 aa).

Residues 1–20 (MRRSTIVPTSRTSSSSPSPS) show a composition bias toward low complexity. The segment at 1-25 (MRRSTIVPTSRTSSSSPSPSQMKSF) is disordered.

It belongs to the DASH complex HSK3 family. In terms of assembly, component of the DASH complex consisting of ask1, dad1, dad2, dad3, dad4, dam1, duo1, dad5, spc19 and spc34, with a stoichiometry of one copy of each subunit per complex. Multiple DASH complexes oligomerize to form a ring that encircles spindle microtubules and organizes the rod-like NDC80 complexes of the outer kinetochore. DASH complex oligomerization strengthens microtubule attachments. On cytoplasmic microtubules, DASH complexes appear to form patches instead of rings.

It localises to the nucleus. It is found in the cytoplasm. Its subcellular location is the cytoskeleton. The protein localises to the spindle. The protein resides in the chromosome. It localises to the centromere. It is found in the kinetochore. Functionally, component of the DASH complex that connects microtubules with kinetochores and couples microtubule depolymerisation to chromosome movement; it is involved in retrieving kinetochores to the spindle poles before their re-orientation on the spindle in early mitosis and allows microtubule depolymerization to pull chromosomes apart and resist detachment during anaphase. Kinetochores, consisting of a centromere-associated inner segment and a microtubule-contacting outer segment, play a crucial role in chromosome segregation by mediating the physical connection between centromeric DNA and microtubules. Kinetochores also serve as an input point for the spindle assembly checkpoint, which delays anaphase until all chromosomes have bioriented on the mitotic spindle. The DASH complex mediates bipolar kinetochore-microtubule attachments and facilitates the formation of additional interactions between outer kinetochore components and spindle microtubules. During chromosome movement along the microtubule, it is required both for the sliding of kinetochores along the lateral side of the microtubule and also for microtubule end-on pulling on the kinetochore. Modulates cytoplasmic microtubule dynamics by tracking the plus-end of shortening microtubules and slowing their depolymerization. The sequence is that of DASH complex subunit DAD5 from Schizosaccharomyces pombe (strain 972 / ATCC 24843) (Fission yeast).